The sequence spans 91 residues: Small ribosomal subunit protein uS19 (91 aa).

The protein belongs to the universal ribosomal protein uS19 family.

Protein S19 forms a complex with S13 that binds strongly to the 16S ribosomal RNA. The polypeptide is Small ribosomal subunit protein uS19 (Lactobacillus delbrueckii subsp. bulgaricus (strain ATCC 11842 / DSM 20081 / BCRC 10696 / JCM 1002 / NBRC 13953 / NCIMB 11778 / NCTC 12712 / WDCM 00102 / Lb 14)).